The chain runs to 349 residues: tRNA pseudouridine synthase D (349 aa).

A substrate-binding site is contributed by Phe27. The active-site Nucleophile is Asp80. Asn129 contacts substrate. One can recognise a TRUD domain in the interval 155–303 (GVPNYFGAQR…VEAARRAMLL (149 aa)). A substrate-binding site is contributed by Phe329.

This sequence belongs to the pseudouridine synthase TruD family.

It catalyses the reaction uridine(13) in tRNA = pseudouridine(13) in tRNA. Its function is as follows. Responsible for synthesis of pseudouridine from uracil-13 in transfer RNAs. The polypeptide is tRNA pseudouridine synthase D (Escherichia coli O8 (strain IAI1)).